We begin with the raw amino-acid sequence, 344 residues long: Galactoside alpha-(1,2)-fucosyltransferase 2 (344 aa).

The Cytoplasmic portion of the chain corresponds to 1–7 (MFSTQTF). The helical; Signal-anchor for type II membrane protein transmembrane segment at 8-28 (FFFPTAPFILFVFTASTIFHL) threads the bilayer. Residues 29-344 (HQRLEKMQPT…PADLSPLLKH (316 aa)) lie on the Lumenal side of the membrane. N-linked (GlcNAc...) asparagine glycosylation is found at N189, N255, N283, and N309.

As to expression, expressed in brain, heart, lung, intestin and kidney.

The protein resides in the golgi apparatus. It is found in the golgi stack membrane. The enzyme catalyses a beta-D-galactosyl-(1-&gt;3)-N-acetyl-beta-D-glucosaminyl derivative + GDP-beta-L-fucose = an alpha-L-Fuc-(1-&gt;2)-beta-D-Gal-(1-&gt;3)-beta-D-GlcNAc derivative + GDP + H(+). It carries out the reaction a beta-D-galactosyl-(1-&gt;4)-N-acetyl-beta-D-glucosaminyl derivative + GDP-beta-L-fucose = an alpha-L-Fuc-(1-&gt;2)-beta-D-Gal-(1-&gt;4)-beta-D-GlcNAc derivative + GDP + H(+). The catalysed reaction is a ganglioside GM1 + GDP-beta-L-fucose = a ganglioside Fuc-GM1 + GDP + H(+). It catalyses the reaction a neolactoside nLc4Cer + GDP-beta-L-fucose = a neolactoside IV(2)-alpha-Fuc-nLc4Cer + GDP + H(+). The enzyme catalyses a neolactoside nLc4Cer(d18:1(4E)) + GDP-beta-L-fucose = a neolactoside IV(2)-alpha-Fuc-nLc4Cer(d18:1(4E)) + GDP + H(+). It carries out the reaction a ganglioside GA1 + GDP-beta-L-fucose = a ganglioside Fuc-GA1 + GDP + H(+). The catalysed reaction is Lc4Cer + GDP-beta-L-fucose = alpha-L-fucosyl-(1-&gt;2)-beta-D-galactosyl-(1-&gt;3)-N-acetyl-beta-D-glucosaminyl-(1-&gt;3)-beta-D-galactosyl-(1-&gt;4)-beta-D-glucosyl-(1&lt;-&gt;1')-ceramide + GDP + H(+). It catalyses the reaction a beta-D-Gal-(1-&gt;3)-beta-D-GlcNAc-(1-&gt;3)-beta-D-Gal-(1-&gt;4)-beta-D-Glc-(1&lt;-&gt;1')-Cer(d18:1(4E)) + GDP-beta-L-fucose = alpha-L-fucosyl-(1-&gt;2)- beta-D-galactosyl-(1-&gt;3)-N-acetyl-beta-D-glucosaminyl-(1-&gt;3)-beta-D-galactosyl-(1-&gt;4)-beta-D-glucosyl-(1&lt;-&gt;1')-N-acylsphing-4-enine + GDP + H(+). The enzyme catalyses a ganglioside GD1b + GDP-beta-L-fucose = a ganglioside Fuc-GD1b + GDP + H(+). It carries out the reaction a ganglioside GM1 (d18:1(4E)) + GDP-beta-L-fucose = a ganglioside Fuc-GM1 (d18:1(4E)) + GDP + H(+). The catalysed reaction is a globoside GalGb4Cer (d18:1(4E)) + GDP-beta-L-fucose = a globoside Globo-H (d18:1(4E)) + GDP + H(+). It catalyses the reaction a lactoside III(4)-a-Fuc-Lc4Cer + GDP-beta-L-fucose = a lactoside IV(2),III(4)-a-[Fuc]2-Lc4Cer + GDP + H(+). The enzyme catalyses beta-D-galactosyl-(1-&gt;3)-N-acetyl-D-galactosamine + GDP-beta-L-fucose = alpha-L-fucosyl-(1-&gt;2)-beta-D-galactosyl-(1-&gt;3)-N-acetyl-D-galactosamine + GDP + H(+). Its pathway is protein modification; protein glycosylation. Functionally, catalyzes the transfer of L-fucose, from a guanosine diphosphate-beta-L-fucose, to the terminal galactose on both O- and N-linked glycans chains of cell surface glycoproteins and glycolipids and the resulting epitope regulates several processes such as cell-cell interaction including host-microbe interaction, cell surface expression and cell proliferation. Preferentially fucosylates gangliosides GA1 and GM1 in the antrum, cecum and colon and in the female reproductive organs. Fucosylated host glycoproteins or glycolipids mediate interaction with intestinal microbiota influencing its composition. Creates a soluble precursor oligosaccharide FuC-alpha ((1,2)Galbeta-) called the H antigen which is an essential substrate for the final step in the soluble ABO blood group antigen synthesis pathway. This is Galactoside alpha-(1,2)-fucosyltransferase 2 from Bos taurus (Bovine).